We begin with the raw amino-acid sequence, 1821 residues long: PH-interacting protein (1821 aa).

At S136 the chain carries Phosphoserine. 5 WD repeats span residues 181-222 (GHLS…ATLR), 224-262 (HAAE…PLAV), 265-310 (GHSA…INPR), 319-360 (RPGV…KISE), and 363-402 (FHTD…WKSI). Residue K421 forms a Glycyl lysine isopeptide (Lys-Gly) (interchain with G-Cter in SUMO2) linkage. 3 WD repeats span residues 422 to 461 (ITKM…LIHV), 464 to 504 (GHED…KVRS), and 512 to 551 (QGHG…KYDK). Phosphoserine occurs at positions 641, 659, 674, 677, 683, and 692. Disordered regions lie at residues 653–695 (EQDL…SGQI) and 782–927 (DLGD…RLAV). The span at 665-681 (SNASRVNRGSVSSTSEV) shows a compositional bias: polar residues. A compositionally biased stretch (basic and acidic residues) spans 800–810 (SALEETPRPLE). The segment covering 841–854 (SDGSSSDYSSDYSD) has biased composition (low complexity). A phosphoserine mark is found at S879, S880, S881, and S911. A compositionally biased stretch (basic residues) spans 912–924 (PKKKKPKERKQKR). Residues 924–1129 (RLAVGELTEN…MELIPNNAVF (206 aa)) form a mediates interaction with IRS1 region. In terms of domain architecture, Bromo 1 spans 1156 to 1263 (WGANPRDEEC…DLLLHFIKDQ (108 aa)). Residues S1281, S1283, and S1296 each carry the phosphoserine modification. Residues 1282–1310 (DSEEEEKDADVPGTSTRKRKDHQPRRRLR) are disordered. The span at 1297-1310 (TRKRKDHQPRRRLR) shows a compositional bias: basic residues. Position 1315 is a phosphoserine (S1315). Residues 1316 to 1421 (YDIQAWKKQC…AFFEEHISSV (106 aa)) form the Bromo 2 domain. The residue at position 1359 (T1359) is a Phosphothreonine. S1405 carries the post-translational modification Phosphoserine. A compositionally biased stretch (basic residues) spans 1435-1446 (NTISKKRKKRNR). Positions 1435-1507 (NTISKKRKKR…PESSSVVRTR (73 aa)) are disordered. Low complexity predominate over residues 1447–1457 (SSSLSSSAASS). A Glycyl lysine isopeptide (Lys-Gly) (interchain with G-Cter in SUMO1); alternate cross-link involves residue K1470. A Glycyl lysine isopeptide (Lys-Gly) (interchain with G-Cter in SUMO2); alternate cross-link involves residue K1470. Positions 1471–1482 (SEVSTSPFSIPT) are enriched in polar residues. S1479 bears the Phosphoserine mark. N6-acetyllysine is present on K1497. The residue at position 1525 (S1525) is a Phosphoserine. Position 1533 is an N6-acetyllysine (K1533). Residues 1556 to 1576 (STLSSPDPLTFSHATKNNSAK) show a composition bias toward polar residues. Disordered regions lie at residues 1556–1596 (STLS…VFSK), 1623–1676 (QVNG…NSEQ), and 1740–1785 (RSNR…DSEE). The residue at position 1560 (S1560) is a Phosphoserine. K1644 is covalently cross-linked (Glycyl lysine isopeptide (Lys-Gly) (interchain with G-Cter in SUMO2)). Phosphoserine is present on S1651. K1670 is covalently cross-linked (Glycyl lysine isopeptide (Lys-Gly) (interchain with G-Cter in SUMO2)). A phosphoserine mark is found at S1762 and S1783.

In terms of assembly, interacts (via bromo domain) with acetylated lysine residues on histone H1.4, histone H3 and H4 (in vitro). Interacts with IRS1 and IRS2. In terms of tissue distribution, widely expressed with most abundant expression detected in pancreatic islets, brain and skeletal muscle. Predominantly expressed in developing and regenerating neurons. Expressed in adult brain (granular layer of the olfactorium bulb, hippocampus, dentate gyrus and cerebellum internal granular layer). Expressed in the CA3 region of adult hippocampus, adult and fetal retina, perinatal dorsal root ganglion and embryonal olfactory epithelia (at protein level).

Its subcellular location is the nucleus. Functionally, probable regulator of the insulin and insulin-like growth factor signaling pathways. Stimulates cell proliferation through regulation of cyclin transcription and has an anti-apoptotic activity through AKT1 phosphorylation and activation. Plays a role in the regulation of cell morphology and cytoskeletal organization. The chain is PH-interacting protein (Phip) from Mus musculus (Mouse).